The sequence spans 288 residues: DNA repair protein RecO (288 aa).

Belongs to the RecO family.

In terms of biological role, involved in DNA repair and RecF pathway recombination. In Trichodesmium erythraeum (strain IMS101), this protein is DNA repair protein RecO.